A 699-amino-acid chain; its full sequence is DNA topoisomerase 1 (699 aa).

Basic and acidic residues-rich tracts occupy residues 1 to 15 (MAKS…KNEL) and 22 to 35 (IELK…ESKG). Residues 1–37 (MAKSKVVEKDKKNELDNQSADIELKGQSKNEESKGGK) are disordered. One can recognise a Toprim domain in the interval 38 to 146 (KKVIIVESPA…NIITFTEITE (109 aa)). Residues Glu-44 and Asp-115 each contribute to the Mg(2+) site. One can recognise a Topo IA-type catalytic domain in the interval 160-583 (DMNKVNAQLA…SFLKEFNKDL (424 aa)). Residues 194–199 (SAGRVQ) are interaction with DNA. Tyr-324 functions as the O-(5'-phospho-DNA)-tyrosine intermediate in the catalytic mechanism. Residues 601-624 (CEDCSGNYKLKVGKYGLYLHCPNC) form a C4-type zinc finger. The disordered stretch occupies residues 649–699 (QESQEENGEKNSVQSEESSANSGNRKFYRKRRTSGSKKSSTKSASSKAKKK). Positions 661–672 (VQSEESSANSGN) are enriched in polar residues. Positions 674-683 (KFYRKRRTSG) are enriched in basic residues. Low complexity predominate over residues 684–699 (SKKSSTKSASSKAKKK).

The protein belongs to the type IA topoisomerase family. As to quaternary structure, monomer. Mg(2+) serves as cofactor.

The enzyme catalyses ATP-independent breakage of single-stranded DNA, followed by passage and rejoining.. Functionally, releases the supercoiling and torsional tension of DNA, which is introduced during the DNA replication and transcription, by transiently cleaving and rejoining one strand of the DNA duplex. Introduces a single-strand break via transesterification at a target site in duplex DNA. The scissile phosphodiester is attacked by the catalytic tyrosine of the enzyme, resulting in the formation of a DNA-(5'-phosphotyrosyl)-enzyme intermediate and the expulsion of a 3'-OH DNA strand. The free DNA strand then undergoes passage around the unbroken strand, thus removing DNA supercoils. Finally, in the religation step, the DNA 3'-OH attacks the covalent intermediate to expel the active-site tyrosine and restore the DNA phosphodiester backbone. This is DNA topoisomerase 1 from Fervidobacterium islandicum.